A 218-amino-acid polypeptide reads, in one-letter code: Cytidylate kinase (218 aa).

Residue 21 to 29 (GPAASGKGT) participates in ATP binding.

This sequence belongs to the cytidylate kinase family. Type 1 subfamily.

Its subcellular location is the cytoplasm. It carries out the reaction CMP + ATP = CDP + ADP. The catalysed reaction is dCMP + ATP = dCDP + ADP. The chain is Cytidylate kinase from Rickettsia canadensis (strain McKiel).